We begin with the raw amino-acid sequence, 71 residues long: Gas vesicle protein A (71 aa).

The segment at 12–22 (LAEVIDRILDK) is alpha helix 1. Positions 23–32 (GIVIDAWVRV) are beta-strand 1. The interval 33 to 36 (SLVG) is beta turn. The interval 37–46 (IELLAIEARI) is beta-strand 2. The tract at residues 47–70 (VIASVETYLKYAEAVGLTQSAAVP) is alpha helix 2.

Belongs to the gas vesicle GvpA family. In terms of assembly, the gas vesicle shell is 2 nm thick and consists of a single layer of this protein. It forms helical ribs nearly perpendicular to the long axis of the vesicle.

It is found in the gas vesicle shell. In terms of biological role, gas vesicles (GV) are hollow, gas filled proteinaceous nanostructures found in some microorganisms. During planktonic growth they allow positioning of the organism at a favorable depth for light or nutrient acquisition. GVs are highly permeable to gas. GvpA forms the protein shell. The ratio of GvpA:GvpC is estimated to be 33:1 and more recently 25:1. The polypeptide is Gas vesicle protein A (Dolichospermum flosaquae (Anabaena flos-aquae)).